The sequence spans 395 residues: Chorismate synthase (395 aa).

The NADP(+) site is built by R40 and R46. Residues 135–137 and 256–257 contribute to the FMN site; these read RAS and QA. Residues 272–283 are compositionally biased toward basic and acidic residues; that stretch reads RRGSQAHDEMRP. The tract at residues 272–296 is disordered; the sequence is RRGSQAHDEMRPGPDGILRSTNRAG. Residues G300, 315–319, and R341 each bind FMN; that span reads KPIST.

It belongs to the chorismate synthase family. Homotetramer. FMNH2 is required as a cofactor.

The enzyme catalyses 5-O-(1-carboxyvinyl)-3-phosphoshikimate = chorismate + phosphate. It functions in the pathway metabolic intermediate biosynthesis; chorismate biosynthesis; chorismate from D-erythrose 4-phosphate and phosphoenolpyruvate: step 7/7. Its function is as follows. Catalyzes the anti-1,4-elimination of the C-3 phosphate and the C-6 proR hydrogen from 5-enolpyruvylshikimate-3-phosphate (EPSP) to yield chorismate, which is the branch point compound that serves as the starting substrate for the three terminal pathways of aromatic amino acid biosynthesis. This reaction introduces a second double bond into the aromatic ring system. This chain is Chorismate synthase, found in Rhodococcus jostii (strain RHA1).